The following is a 155-amino-acid chain: Ciliary microtubule inner protein 2C (155 aa).

The protein belongs to the CIMIP2 family.

The protein resides in the cytoplasm. The protein localises to the cytoskeleton. It localises to the cilium axoneme. Functionally, microtubule inner protein (MIP) part of the dynein-decorated doublet microtubules (DMTs) in cilia axoneme, which is required for motile cilia beating. The protein is Ciliary microtubule inner protein 2C (cimip2c) of Xenopus tropicalis (Western clawed frog).